Here is a 349-residue protein sequence, read N- to C-terminus: tRNA pseudouridine synthase D (349 aa).

Residue Phe26 coordinates substrate. The active-site Nucleophile is the Asp79. Asn128 serves as a coordination point for substrate. Positions 154–302 constitute a TRUD domain; the sequence is GVPNYFGSQR…VEGSRRAVLL (149 aa). Position 328 (Phe328) interacts with substrate.

The protein belongs to the pseudouridine synthase TruD family.

The catalysed reaction is uridine(13) in tRNA = pseudouridine(13) in tRNA. Functionally, responsible for synthesis of pseudouridine from uracil-13 in transfer RNAs. This is tRNA pseudouridine synthase D from Yersinia pestis bv. Antiqua (strain Antiqua).